The chain runs to 315 residues: Ribosomal protein L11 methyltransferase (315 aa).

S-adenosyl-L-methionine is bound by residues threonine 162, glycine 183, aspartate 205, and asparagine 248.

This sequence belongs to the methyltransferase superfamily. PrmA family.

It localises to the cytoplasm. The enzyme catalyses L-lysyl-[protein] + 3 S-adenosyl-L-methionine = N(6),N(6),N(6)-trimethyl-L-lysyl-[protein] + 3 S-adenosyl-L-homocysteine + 3 H(+). Its function is as follows. Methylates ribosomal protein L11. The protein is Ribosomal protein L11 methyltransferase of Enterococcus faecalis (strain ATCC 700802 / V583).